The primary structure comprises 342 residues: Nicotinate-nucleotide--dimethylbenzimidazole phosphoribosyltransferase (342 aa).

Residue Glu311 is the Proton acceptor of the active site.

This sequence belongs to the CobT family.

The catalysed reaction is 5,6-dimethylbenzimidazole + nicotinate beta-D-ribonucleotide = alpha-ribazole 5'-phosphate + nicotinate + H(+). It participates in nucleoside biosynthesis; alpha-ribazole biosynthesis; alpha-ribazole from 5,6-dimethylbenzimidazole: step 1/2. Catalyzes the synthesis of alpha-ribazole-5'-phosphate from nicotinate mononucleotide (NAMN) and 5,6-dimethylbenzimidazole (DMB). The protein is Nicotinate-nucleotide--dimethylbenzimidazole phosphoribosyltransferase of Vibrio vulnificus (strain CMCP6).